Reading from the N-terminus, the 154-residue chain is Fimbrial protein (154 aa).

Residues 1–6 constitute a propeptide, leader sequence; the sequence is MNAQKG. N-methylphenylalanine is present on Phe-7. Residues 7-29 traverse the membrane as a helical segment; sequence FTLIELMIVIAIIGILAAIALPA.

The protein belongs to the N-Me-Phe pilin family. The pili are polar flexible filaments of about 5.4 nanometers diameter and 2.5 micrometers average length; they consist of only a single polypeptide chain arranged in a helical configuration of five subunits per turn in the assembled pilus.

The protein localises to the fimbrium. The protein resides in the membrane. This Moraxella nonliquefaciens protein is Fimbrial protein (tfpA).